Here is an 857-residue protein sequence, read N- to C-terminus: Autoinducer 2 sensor kinase/phosphatase LuxQ (857 aa).

Transmembrane regions (helical) follow at residues 14 to 34 and 283 to 303; these read IASF…VSVL and FWMA…RWWL. In terms of domain architecture, Histidine kinase spans 486-706; sequence KMSHELRTPL…RFEIQLPIEL (221 aa). A Phosphohistidine; by autocatalysis modification is found at histidine 489. Residues 731–846 form the Response regulatory domain; it reads RVLLVEDNHT…TLHKALEHFK (116 aa). Aspartate 780 carries the 4-aspartylphosphate modification.

As to quaternary structure, binds the complex formed by AI-2 and LuxP.

Its subcellular location is the cell inner membrane. The enzyme catalyses ATP + protein L-histidine = ADP + protein N-phospho-L-histidine.. Its function is as follows. At low cell density, in absence of AI-2 (autoinducer 2), LuxQ has a kinase activity and autophosphorylates on a histidine residue. The phosphoryl group is then transferred to an aspartate residue in the response regulator domain. The phosphoryl group is transferred to LuxU, and ultimately to LuxO. At high cell density, in the presence of AI-2, the kinase activity is inactivated, and the response regulator domain has a phosphatase activity. The protein is Autoinducer 2 sensor kinase/phosphatase LuxQ (luxQ) of Vibrio cholerae serotype O1 (strain ATCC 39315 / El Tor Inaba N16961).